The following is a 277-amino-acid chain: Probable endonuclease 4 (277 aa).

Zn(2+)-binding residues include H67, H107, E141, D173, H176, H210, D223, H225, and E255.

The protein belongs to the AP endonuclease 2 family. It depends on Zn(2+) as a cofactor.

The catalysed reaction is Endonucleolytic cleavage to 5'-phosphooligonucleotide end-products.. In terms of biological role, endonuclease IV plays a role in DNA repair. It cleaves phosphodiester bonds at apurinic or apyrimidinic (AP) sites, generating a 3'-hydroxyl group and a 5'-terminal sugar phosphate. This Haloarcula marismortui (strain ATCC 43049 / DSM 3752 / JCM 8966 / VKM B-1809) (Halobacterium marismortui) protein is Probable endonuclease 4.